The following is a 540-amino-acid chain: Ipecac alkaloid beta-glucosidase 9 (540 aa).

A beta-D-glucoside is bound by residues Gln-36, His-140, 185-186 (NE), Tyr-350, Glu-421, Trp-470, and Phe-486. Glu-186 serves as the catalytic Proton donor. The active-site Nucleophile is Glu-421.

Belongs to the glycosyl hydrolase 1 family.

Its subcellular location is the cytoplasm. The protein localises to the cytosol. It catalyses the reaction deacetylipecoside + H2O = deacetylipecoside aglycone + D-glucose. The catalysed reaction is deacetylisoipecoside + H2O = deacetylisoipecoside aglycone + D-glucose. Its pathway is alkaloid biosynthesis. Functionally, beta-glucosidase catalyzing deglucosylation on N-deacetylisoipecoside and N-deacetylipecoside. The chain is Ipecac alkaloid beta-glucosidase 9 from Carapichea ipecacuanha (Ipecac).